Here is a 747-residue protein sequence, read N- to C-terminus: Probable type III restriction-modification enzyme HindVI Mod subunit (747 aa).

The segment at 267-270 is binding of S-adenosyl methionine; it reads DPPY.

The protein belongs to the N(4)/N(6)-methyltransferase family. Homodimer, also forms a functional restriction-competent complex with Res.

It carries out the reaction a 2'-deoxyadenosine in DNA + S-adenosyl-L-methionine = an N(6)-methyl-2'-deoxyadenosine in DNA + S-adenosyl-L-homocysteine + H(+). Its function is as follows. A beta subtype methylase that binds the system-specific DNA recognition site 5'-CGAAT-3' and methylates A-4 (of only 1 strand). DNA restriction requires both the Res and Mod subunits. This is Probable type III restriction-modification enzyme HindVI Mod subunit from Haemophilus influenzae (strain ATCC 51907 / DSM 11121 / KW20 / Rd).